We begin with the raw amino-acid sequence, 514 residues long: 2,3-bisphosphoglycerate-independent phosphoglycerate mutase (514 aa).

Mn(2+)-binding residues include Asp14 and Ser64. Ser64 (phosphoserine intermediate) is an active-site residue. Substrate is bound by residues His125, 155–156 (RD), Arg187, Arg193, 263–266 (RADR), and Lys336. Positions 403, 407, 444, 445, and 463 each coordinate Mn(2+).

The protein belongs to the BPG-independent phosphoglycerate mutase family. In terms of assembly, monomer. Requires Mn(2+) as cofactor.

It catalyses the reaction (2R)-2-phosphoglycerate = (2R)-3-phosphoglycerate. It participates in carbohydrate degradation; glycolysis; pyruvate from D-glyceraldehyde 3-phosphate: step 3/5. In terms of biological role, catalyzes the interconversion of 2-phosphoglycerate and 3-phosphoglycerate. The protein is 2,3-bisphosphoglycerate-independent phosphoglycerate mutase of Shewanella denitrificans (strain OS217 / ATCC BAA-1090 / DSM 15013).